Consider the following 186-residue polypeptide: Elongation factor P (186 aa).

The protein belongs to the elongation factor P family.

It localises to the cytoplasm. It participates in protein biosynthesis; polypeptide chain elongation. Its function is as follows. Involved in peptide bond synthesis. Stimulates efficient translation and peptide-bond synthesis on native or reconstituted 70S ribosomes in vitro. Probably functions indirectly by altering the affinity of the ribosome for aminoacyl-tRNA, thus increasing their reactivity as acceptors for peptidyl transferase. This is Elongation factor P from Brucella ovis (strain ATCC 25840 / 63/290 / NCTC 10512).